Here is a 520-residue protein sequence, read N- to C-terminus: GMP synthase [glutamine-hydrolyzing] (520 aa).

A Glutamine amidotransferase type-1 domain is found at R8–D202. C86 (nucleophile) is an active-site residue. Active-site residues include H177 and E179. The region spanning W203 to R395 is the GMPS ATP-PPase domain. S230–S236 is a binding site for ATP.

In terms of assembly, homodimer.

It carries out the reaction XMP + L-glutamine + ATP + H2O = GMP + L-glutamate + AMP + diphosphate + 2 H(+). It participates in purine metabolism; GMP biosynthesis; GMP from XMP (L-Gln route): step 1/1. Catalyzes the synthesis of GMP from XMP. The protein is GMP synthase [glutamine-hydrolyzing] of Ruegeria sp. (strain TM1040) (Silicibacter sp.).